Here is a 410-residue protein sequence, read N- to C-terminus: UDP-N-acetylglucosamine--N-acetylmuramyl-(pentapeptide) pyrophosphoryl-undecaprenol N-acetylglucosamine transferase (410 aa).

The interval 1–34 (MKDTVSQPAGGRGATAPRPADAASPSCGSSPSAD) is disordered. Over residues 14-34 (ATAPRPADAASPSCGSSPSAD) the composition is skewed to low complexity. UDP-N-acetyl-alpha-D-glucosamine contacts are provided by residues 45-47 (TAG), Asn167, Arg204, Ser238, and Gln334.

It belongs to the glycosyltransferase 28 family. MurG subfamily.

The protein resides in the cell membrane. It catalyses the reaction di-trans,octa-cis-undecaprenyl diphospho-N-acetyl-alpha-D-muramoyl-L-alanyl-D-glutamyl-meso-2,6-diaminopimeloyl-D-alanyl-D-alanine + UDP-N-acetyl-alpha-D-glucosamine = di-trans,octa-cis-undecaprenyl diphospho-[N-acetyl-alpha-D-glucosaminyl-(1-&gt;4)]-N-acetyl-alpha-D-muramoyl-L-alanyl-D-glutamyl-meso-2,6-diaminopimeloyl-D-alanyl-D-alanine + UDP + H(+). Its pathway is cell wall biogenesis; peptidoglycan biosynthesis. In terms of biological role, cell wall formation. Catalyzes the transfer of a GlcNAc subunit on undecaprenyl-pyrophosphoryl-MurNAc-pentapeptide (lipid intermediate I) to form undecaprenyl-pyrophosphoryl-MurNAc-(pentapeptide)GlcNAc (lipid intermediate II). This Mycobacterium bovis (strain ATCC BAA-935 / AF2122/97) protein is UDP-N-acetylglucosamine--N-acetylmuramyl-(pentapeptide) pyrophosphoryl-undecaprenol N-acetylglucosamine transferase.